A 343-amino-acid chain; its full sequence is Anthranilate phosphoribosyltransferase (343 aa).

5-phospho-alpha-D-ribose 1-diphosphate-binding positions include Gly-84, 87–88, Thr-92, 94–97, 112–120, and Ser-124; these read GD, NIST, and KHGNRGVSS. Gly-84 is an anthranilate binding site. Residue Ser-96 coordinates Mg(2+). Asn-115 lines the anthranilate pocket. Position 170 (Arg-170) interacts with anthranilate. The Mg(2+) site is built by Asp-229 and Glu-230.

It belongs to the anthranilate phosphoribosyltransferase family. In terms of assembly, homodimer. Mg(2+) is required as a cofactor.

The catalysed reaction is N-(5-phospho-beta-D-ribosyl)anthranilate + diphosphate = 5-phospho-alpha-D-ribose 1-diphosphate + anthranilate. It functions in the pathway amino-acid biosynthesis; L-tryptophan biosynthesis; L-tryptophan from chorismate: step 2/5. Catalyzes the transfer of the phosphoribosyl group of 5-phosphorylribose-1-pyrophosphate (PRPP) to anthranilate to yield N-(5'-phosphoribosyl)-anthranilate (PRA). This is Anthranilate phosphoribosyltransferase from Burkholderia pseudomallei (strain 1106a).